Consider the following 79-residue polypeptide: Small ribosomal subunit protein bS21 (79 aa).

Composition is skewed to basic residues over residues 47-59 (RKQAAAVKRHLKK) and 69-79 (GVGHRRKKSTT). Residues 47–79 (RKQAAAVKRHLKKISRDVSSRRGVGHRRKKSTT) form a disordered region.

Belongs to the bacterial ribosomal protein bS21 family.

In Legionella pneumophila (strain Paris), this protein is Small ribosomal subunit protein bS21.